An 856-amino-acid polypeptide reads, in one-letter code: DNA mismatch repair protein MutS (856 aa).

605–612 is an ATP binding site; the sequence is GPNMSGKS.

The protein belongs to the DNA mismatch repair MutS family.

Its function is as follows. This protein is involved in the repair of mismatches in DNA. It is possible that it carries out the mismatch recognition step. This protein has a weak ATPase activity. In Lysinibacillus sphaericus (strain C3-41), this protein is DNA mismatch repair protein MutS.